A 326-amino-acid polypeptide reads, in one-letter code: MTTPMKIDKVSIVIPVYNEQESLPELMRRTVAACEQLDAAYEILLVDDGSSDDSAAVLTAAAEAPGSHIVAVLLNRNYGQHSAIMAGFSHVTGDLVVTLDADLQNPPEEIPRLVEVAAQDYDVVGTVRQNRQDSWFRKRASRMINALIQRTTGKAMGDYGCMLRAYRRHIIDAMLHCHERSTFIPILANTFARKTIEIPVMHSEREFGDSKYSLMKLVNLMYDLVTCLTTTPLRMLSVIGSMIALLGFAFSLLLITLRLFLGSHWAAEGVFMLFAVLFIFIGAQFIGMGLLGEYIGRIYNDVRARPRYFVQCVVSQNPLSSQQETQ.

Helical transmembrane passes span 235–255 (MLSV…LLLI) and 270–290 (VFML…GMGL).

The protein belongs to the glycosyltransferase 2 family.

It is found in the cell inner membrane. The catalysed reaction is UDP-4-deoxy-4-formamido-beta-L-arabinose + di-trans,octa-cis-undecaprenyl phosphate = 4-deoxy-4-formamido-alpha-L-arabinopyranosyl di-trans,octa-cis-undecaprenyl phosphate + UDP. Its pathway is glycolipid biosynthesis; 4-amino-4-deoxy-alpha-L-arabinose undecaprenyl phosphate biosynthesis; 4-amino-4-deoxy-alpha-L-arabinose undecaprenyl phosphate from UDP-4-deoxy-4-formamido-beta-L-arabinose and undecaprenyl phosphate: step 1/2. It participates in bacterial outer membrane biogenesis; lipopolysaccharide biosynthesis. Its function is as follows. Catalyzes the transfer of 4-deoxy-4-formamido-L-arabinose from UDP to undecaprenyl phosphate. The modified arabinose is attached to lipid A and is required for resistance to polymyxin and cationic antimicrobial peptides. The protein is Undecaprenyl-phosphate 4-deoxy-4-formamido-L-arabinose transferase of Sodalis glossinidius (strain morsitans).